A 36-amino-acid polypeptide reads, in one-letter code: Conotoxin Cal6.1h (36 aa).

Residues 1 to 7 constitute a propeptide that is removed on maturation; sequence GLGRPSR. 3 disulfide bridges follow: C9-C25, C16-C29, and C24-C34.

The protein belongs to the conotoxin O1 superfamily. Expressed by the venom duct.

It localises to the secreted. In terms of biological role, probable neurotoxin with unknown target. Possibly targets ion channels. The polypeptide is Conotoxin Cal6.1h (Californiconus californicus (California cone)).